The following is a 402-amino-acid chain: MSTETETHLGESKRVILSSLIKQLSPNKEIKHMVLPCFLLQPRSTLESFTDMFTYIDELYKINEIDDEGERFLQFVKFYLTGWHTRPKGICKPFNPVIGEEFECFWSNNKNEDLPHIDELIEDNNSDVGVFKAEQISHHPPLSAYVFYNKFQKILVNGNICPSYVKFMGNSAESHLQGILEFNFFKWNECFECTLPTVGVKGIILGKLSPFTCGDIEIKSKNSKYSCKLEFLFKGLFGSSKNINGIKGTILYDNKPIYKVRGNWDKQIFIKKINEIAGTHGGSSSGSHTNSTERCLMDVSLLKNSKEKYTKPIEQQPPNSSYHLWELVTKNINNNNDKETAEEKAKIEEKQRKEESERREKGILWEPKEFHFKENPNNEYKTTFYYNDIPKLFDNLQSKPIQ.

Positions 333-366 are disordered; it reads NNNNDKETAEEKAKIEEKQRKEESERREKGILWE. The segment covering 336–366 has biased composition (basic and acidic residues); sequence NDKETAEEKAKIEEKQRKEESERREKGILWE.

It belongs to the OSBP family.

The sequence is that of Oxysterol-binding protein 12 (osbL) from Dictyostelium discoideum (Social amoeba).